The chain runs to 206 residues: LexA repressor (206 aa).

Residues 28-48 (VREICNAVGLSSTSTVHGHLS) constitute a DNA-binding region (H-T-H motif). Active-site for autocatalytic cleavage activity residues include Ser-128 and Lys-166.

This sequence belongs to the peptidase S24 family. Homodimer.

The enzyme catalyses Hydrolysis of Ala-|-Gly bond in repressor LexA.. Its function is as follows. Represses a number of genes involved in the response to DNA damage (SOS response), including recA and lexA. In the presence of single-stranded DNA, RecA interacts with LexA causing an autocatalytic cleavage which disrupts the DNA-binding part of LexA, leading to derepression of the SOS regulon and eventually DNA repair. This Ligilactobacillus salivarius (strain UCC118) (Lactobacillus salivarius) protein is LexA repressor.